A 157-amino-acid chain; its full sequence is Cytochrome c-type biogenesis protein CcmE (157 aa).

Residues 1-7 lie on the Cytoplasmic side of the membrane; sequence MTPRQRR. A helical; Signal-anchor for type II membrane protein transmembrane segment spans residues 8–28; sequence LGLLAAALACCGVAAALVLNA. The Periplasmic segment spans residues 29–157; the sequence is FRANLVFFFS…GAMAAQELRR (129 aa). Heme-binding residues include His-123 and Tyr-127.

This sequence belongs to the CcmE/CycJ family.

It is found in the cell inner membrane. Functionally, heme chaperone required for the biogenesis of c-type cytochromes. Transiently binds heme delivered by CcmC and transfers the heme to apo-cytochromes in a process facilitated by CcmF and CcmH. The chain is Cytochrome c-type biogenesis protein CcmE from Cupriavidus taiwanensis (strain DSM 17343 / BCRC 17206 / CCUG 44338 / CIP 107171 / LMG 19424 / R1) (Ralstonia taiwanensis (strain LMG 19424)).